Reading from the N-terminus, the 396-residue chain is Diels-Alderase mpsD (396 aa).

Belongs to the Diels-Alderase family.

Its pathway is secondary metabolite biosynthesis. Functionally, diels-Alderase; part of the gene cluster that mediates the biosynthesis of macrophasetins, 3-decalinoyltetramic acids (DTAs) which feature a tetramate (pyrrolidine-2,4-dione) unit connected to a decalin fragment and that have potent bioactivities. The PKS-NRPS mpsA together with its associated enoylreductase partner mpsG incorporate one unit of acetyl-CoA, seven units of malonyl-CoA, and one unit of L-alanine to assemble the linear tetramic acid intermediate corresponding to the backbone of macrophasetins. Without the Diels-Alderase mpsD, the mpsA/G product can undergo the non-enzymatic intramolecular Diels-Alder (IMDA) reaction to generate both macrophasetin A and macrophasetin B. Catalyzed by mpsD, the linear tetramic acid intermediate is thoroughly converted to macrophasetin A via the endo-IMDA reaction in a regioselective and stereoselective manner. Finally, the cytochrome P450 monooxygenase mpsF catalyzes the hydroxylation at C20 to yield the end product macrophasetin C. This is Diels-Alderase mpsD from Macrophomina phaseolina (strain MS6) (Charcoal rot fungus).